The sequence spans 642 residues: 5-aminolevulinate synthase, non-specific, mitochondrial (642 aa).

Residues 1-56 (METVVRRCPFLSRVPQAFLQKAGKSLLFYAQNCPKMMEVGAKPAPRTVSTSAAQCQ) constitute a mitochondrion transit peptide. The disordered stretch occupies residues 51–109 (SAAQCQQVKETPPANEKEKTAKAAVQQAPDESQMAQTPDGTQLPPGHPSPSTSQSSGSK). Residues 79–90 (PDESQMAQTPDG) show a composition bias toward polar residues. Low complexity predominate over residues 99–108 (SPSTSQSSGS). 3 residues coordinate substrate: arginine 219, serine 336, and lysine 355. Residues serine 388, histidine 416, and threonine 444 each contribute to the pyridoxal 5'-phosphate site. Residue lysine 447 is part of the active site. Lysine 447 is modified (N6-(pyridoxal phosphate)lysine). Residues threonine 476 and threonine 477 each contribute to the pyridoxal 5'-phosphate site. Threonine 564 contributes to the substrate binding site. Proline 578 is subject to Hydroxyproline.

This sequence belongs to the class-II pyridoxal-phosphate-dependent aminotransferase family. Homodimer. Interacts (hydroxylated form) with VHL. The cofactor is pyridoxal 5'-phosphate. In normoxia, is hydroxylated at Pro-578, promoting interaction with VHL, initiating ubiquitination and subsequent degradation via the proteasome. In terms of processing, ubiquitinated; in normoxia following hydroxylation and interaction with VHL, leading to its subsequent degradation via the proteasome. Expressed in the liver, kidney, brain and testis.

It is found in the mitochondrion inner membrane. It catalyses the reaction succinyl-CoA + glycine + H(+) = 5-aminolevulinate + CO2 + CoA. It functions in the pathway porphyrin-containing compound metabolism; protoporphyrin-IX biosynthesis; 5-aminolevulinate from glycine: step 1/1. In terms of biological role, catalyzes the pyridoxal 5'-phosphate (PLP)-dependent condensation of succinyl-CoA and glycine to form aminolevulinic acid (ALA), with CoA and CO2 as by-products. In Rattus norvegicus (Rat), this protein is 5-aminolevulinate synthase, non-specific, mitochondrial (Alas1).